The primary structure comprises 506 residues: Sucrose transport protein SUT3 (506 aa).

The Cytoplasmic segment spans residues 1–20 (MAVDMELDGGGDGKGKAPPQ). Residues 21–41 (ISLSGLFLACMVAGGVQYGWA) traverse the membrane as a helical segment. Residues 42–54 (LQLSLLTPYIQTL) lie on the Extracellular side of the membrane. A helical membrane pass occupies residues 55–75 (GIPHALTSVMWLCGPIAGLIV). Residues 76-94 (QPCVGLYSDKCTSSLGRRR) lie on the Cytoplasmic side of the membrane. A helical transmembrane segment spans residues 95–115 (PFILTGCIIICISVIVIGFSS). At 116 to 135 (DIGYALGDATEDCKVYRGPR) the chain is on the extracellular side. A helical transmembrane segment spans residues 136-156 (YHAAAAFILGFWLLDFSNNTV). Topologically, residues 157–171 (QGPARALMADLSGRH) are cytoplasmic. A helical membrane pass occupies residues 172–192 (GPSAANAIFCSWMALGNILGY). Over 193–220 (SSGSTNDWHKWFPFLMTRACCEACANLK) the chain is Extracellular. The chain crosses the membrane as a helical span at residues 221–241 (AAFLVAVVFLGLSTAVTMVFA). Over 242 to 275 (REVALDPVAAAKRNEGEASGPLAVFKGMKNLPVG) the chain is Cytoplasmic. The chain crosses the membrane as a helical span at residues 276 to 296 (MPSVLIVTGLTWLSWFPFILF). Over 297 to 327 (DTDWMGREIYHGRPDGSPAEVTAFQEGVRQG) the chain is Extracellular. A helical membrane pass occupies residues 328–348 (AFGLLLNSIVLGISSFLIEPM). The Cytoplasmic segment spans residues 349-355 (CRRLGAR). Residues 356–376 (AVWVMSSAVVCVAMAAVSVLS) traverse the membrane as a helical segment. Topologically, residues 377-404 (AWSLGDFGGSVQDAARAPAEEGGVRASA) are extracellular. A helical transmembrane segment spans residues 405–425 (LALFVFLGLPFAVLCSVPFAV). Residues 426–441 (TAQLTASRGGGQGLCT) are Cytoplasmic-facing. Residues 442–462 (GVLNISIVVPQMAIALGAGPW) traverse the membrane as a helical segment. Residues 463-470 (DELFGEGN) lie on the Extracellular side of the membrane. Residues 471–491 (IPAFAMASVFAAAAAAAGVVL) form a helical membrane-spanning segment. Residues 492–506 (LPKVSVRSVSMAGGH) lie on the Cytoplasmic side of the membrane.

It belongs to the glycoside-pentoside-hexuronide (GPH) cation symporter transporter (TC 2.A.2.4) family. As to quaternary structure, homodimer.

The protein localises to the cell membrane. Its pathway is glycan biosynthesis; sucrose metabolism. Responsible for the transport of sucrose into the cell, with the concomitant uptake of protons (symport system). May also transport other glucosides. The protein is Sucrose transport protein SUT3 (SUT3) of Oryza sativa subsp. indica (Rice).